The chain runs to 168 residues: ATP synthase subunit b (168 aa).

A helical transmembrane segment spans residues 7-26 (FVLSNFIFTLINLWIMYWVL).

This sequence belongs to the ATPase B chain family. F-type ATPases have 2 components, F(1) - the catalytic core - and F(0) - the membrane proton channel. F(1) has five subunits: alpha(3), beta(3), gamma(1), delta(1), epsilon(1). F(0) has three main subunits: a(1), b(2) and c(10-14). The alpha and beta chains form an alternating ring which encloses part of the gamma chain. F(1) is attached to F(0) by a central stalk formed by the gamma and epsilon chains, while a peripheral stalk is formed by the delta and b chains.

It is found in the cell membrane. F(1)F(0) ATP synthase produces ATP from ADP in the presence of a proton or sodium gradient. F-type ATPases consist of two structural domains, F(1) containing the extramembraneous catalytic core and F(0) containing the membrane proton channel, linked together by a central stalk and a peripheral stalk. During catalysis, ATP synthesis in the catalytic domain of F(1) is coupled via a rotary mechanism of the central stalk subunits to proton translocation. In terms of biological role, component of the F(0) channel, it forms part of the peripheral stalk, linking F(1) to F(0). The protein is ATP synthase subunit b of Alkaliphilus metalliredigens (strain QYMF).